The sequence spans 78 residues: Conotoxin TsMSGL-11 (78 aa).

The N-terminal stretch at 1–24 (MSGLGIMVLTLLLLVFMATSHQDA) is a signal peptide. The propeptide occupies 25–44 (GEKQATQRDAINVRRRRSIT). 3 cysteine pairs are disulfide-bonded: Cys-51–Cys-63, Cys-55–Cys-72, and Cys-62–Cys-76. Position 77 is a phenylalanine amide (Phe-77).

It belongs to the conotoxin O3 superfamily. In terms of tissue distribution, expressed by the venom duct.

It localises to the secreted. This chain is Conotoxin TsMSGL-11, found in Conus tessulatus (Tessellate cone).